The following is a 395-amino-acid chain: Phosphopentomutase (395 aa).

6 residues coordinate Mn(2+): aspartate 13, aspartate 288, histidine 293, aspartate 329, histidine 330, and histidine 341.

The protein belongs to the phosphopentomutase family. Mn(2+) is required as a cofactor.

The protein resides in the cytoplasm. It catalyses the reaction 2-deoxy-alpha-D-ribose 1-phosphate = 2-deoxy-D-ribose 5-phosphate. The catalysed reaction is alpha-D-ribose 1-phosphate = D-ribose 5-phosphate. It functions in the pathway carbohydrate degradation; 2-deoxy-D-ribose 1-phosphate degradation; D-glyceraldehyde 3-phosphate and acetaldehyde from 2-deoxy-alpha-D-ribose 1-phosphate: step 1/2. Isomerase that catalyzes the conversion of deoxy-ribose 1-phosphate (dRib-1-P) and ribose 1-phosphate (Rib-1-P) to deoxy-ribose 5-phosphate (dRib-5-P) and ribose 5-phosphate (Rib-5-P), respectively. The sequence is that of Phosphopentomutase from Agathobacter rectalis (strain ATCC 33656 / DSM 3377 / JCM 17463 / KCTC 5835 / VPI 0990) (Eubacterium rectale).